The following is a 196-amino-acid chain: Adenylate kinase (196 aa).

9 to 17 (GIPGVGKST) lines the ATP pocket.

It belongs to the archaeal adenylate kinase family.

The protein localises to the cytoplasm. It carries out the reaction AMP + ATP = 2 ADP. The chain is Adenylate kinase from Pyrococcus furiosus (strain ATCC 43587 / DSM 3638 / JCM 8422 / Vc1).